The primary structure comprises 94 residues: Copper resistance protein K (94 aa).

An N-terminal signal peptide occupies residues 1–20 (MKQKLMVGAFIAAVSLSAAA).

As to quaternary structure, monomer in the copper-bound form. Homodimer as apoprotein. Dissociates into monomers upon copper binding.

The protein localises to the periplasm. Functionally, involved in resistance to copper. Can bind up to 2 copper ions. Has higher affinity for Cu(+) than for Cu(2+). In Cupriavidus metallidurans (strain ATCC 43123 / DSM 2839 / NBRC 102507 / CH34) (Ralstonia metallidurans), this protein is Copper resistance protein K (copK).